The following is a 163-amino-acid chain: Phosphopantetheine adenylyltransferase (163 aa).

Thr-11 is a binding site for substrate. Residues 11–12 (TF) and His-19 contribute to the ATP site. Substrate contacts are provided by Lys-43, Leu-75, and Arg-89. ATP is bound by residues 90 to 92 (GLR), Glu-100, and 125 to 131 (YSFISST).

This sequence belongs to the bacterial CoaD family. In terms of assembly, homohexamer. The cofactor is Mg(2+).

It is found in the cytoplasm. The enzyme catalyses (R)-4'-phosphopantetheine + ATP + H(+) = 3'-dephospho-CoA + diphosphate. The protein operates within cofactor biosynthesis; coenzyme A biosynthesis; CoA from (R)-pantothenate: step 4/5. In terms of biological role, reversibly transfers an adenylyl group from ATP to 4'-phosphopantetheine, yielding dephospho-CoA (dPCoA) and pyrophosphate. This chain is Phosphopantetheine adenylyltransferase, found in Acinetobacter baylyi (strain ATCC 33305 / BD413 / ADP1).